We begin with the raw amino-acid sequence, 502 residues long: ATP synthase subunit alpha (502 aa).

169-176 (GDRQTGKT) serves as a coordination point for ATP.

Belongs to the ATPase alpha/beta chains family. In terms of assembly, F-type ATPases have 2 components, CF(1) - the catalytic core - and CF(0) - the membrane proton channel. CF(1) has five subunits: alpha(3), beta(3), gamma(1), delta(1), epsilon(1). CF(0) has three main subunits: a(1), b(2) and c(9-12). The alpha and beta chains form an alternating ring which encloses part of the gamma chain. CF(1) is attached to CF(0) by a central stalk formed by the gamma and epsilon chains, while a peripheral stalk is formed by the delta and b chains.

The protein localises to the cell membrane. The catalysed reaction is ATP + H2O + 4 H(+)(in) = ADP + phosphate + 5 H(+)(out). Its function is as follows. Produces ATP from ADP in the presence of a proton gradient across the membrane. The alpha chain is a regulatory subunit. In Bacillus pumilus (strain SAFR-032), this protein is ATP synthase subunit alpha.